A 453-amino-acid polypeptide reads, in one-letter code: Growth/differentiation factor 9 (453 aa).

The signal sequence occupies residues 1–27 (MALPNKFFLWFCCFAWLCFPISLDSLP). Residues 28–318 (SRGEAQIVAR…EGVRSSRHRR (291 aa)) constitute a propeptide that is removed on maturation. N-linked (GlcNAc...) asparagine glycans are attached at residues Asn-163, Asn-236, Asn-255, and Asn-269. Positions 282 to 328 (LHPKRKPSQGPDQRRELSAYPVGEEAAEGVRSSRHRRDQESVSSELK) are disordered. Basic and acidic residues predominate over residues 318 to 328 (RDQESVSSELK). Asn-337 is a glycosylation site (N-linked (GlcNAc...) asparagine). 3 cysteine pairs are disulfide-bonded: Cys-352–Cys-418, Cys-381–Cys-450, and Cys-385–Cys-452.

This sequence belongs to the TGF-beta family. In terms of assembly, homodimer or heterodimer (Potential). But, in contrast to other members of this family, cannot be disulfide-linked. Post-translationally, phosphorylated; phosphorylation is critical for GDF9 function.

It localises to the secreted. Its function is as follows. Required for ovarian folliculogenesis. The protein is Growth/differentiation factor 9 (GDF9) of Capra hircus (Goat).